A 504-amino-acid chain; its full sequence is ATP synthase subunit alpha 2 (504 aa).

Residue 169–176 (GDRQTGKT) coordinates ATP.

Belongs to the ATPase alpha/beta chains family. F-type ATPases have 2 components, CF(1) - the catalytic core - and CF(0) - the membrane proton channel. CF(1) has five subunits: alpha(3), beta(3), gamma(1), delta(1), epsilon(1). CF(0) has three main subunits: a(1), b(2) and c(9-12). The alpha and beta chains form an alternating ring which encloses part of the gamma chain. CF(1) is attached to CF(0) by a central stalk formed by the gamma and epsilon chains, while a peripheral stalk is formed by the delta and b chains.

The protein localises to the cell membrane. It carries out the reaction ATP + H2O + 4 H(+)(in) = ADP + phosphate + 5 H(+)(out). Its function is as follows. Produces ATP from ADP in the presence of a proton gradient across the membrane. The alpha chain is a regulatory subunit. The polypeptide is ATP synthase subunit alpha 2 (Listeria innocua serovar 6a (strain ATCC BAA-680 / CLIP 11262)).